The following is a 444-amino-acid chain: C4-dicarboxylate transport protein (444 aa).

The next 8 membrane-spanning stretches (helical) occupy residues 7–29 (LYKSLYFQVIVAIAIGILLGHFY), 44–66 (IKLIKMVIAPIIFCTVVSGIAGM), 79–101 (ALLYFEIVSTIALLIGLVVVNVV), 143–165 (IVGAFANGDILQVLMFSVIFGFA), 186–208 (VMFNIINMIMKLAPIGALGAMAF), 221–243 (LGQLMICFYITCVLFVLVVLGAI), 291–313 (VVGLVIPTGYSFNLDGTSIYLTM), and 353–375 (FIVLAATLSAVGHLPVAGLALIL). Residues 418–444 (SGGRAISDTREEDDLGVAEGPTPTTVK) form a disordered region.

Belongs to the dicarboxylate/amino acid:cation symporter (DAACS) (TC 2.A.23) family.

It localises to the cell inner membrane. Its function is as follows. Responsible for the transport of dicarboxylates such as succinate, fumarate, and malate from the periplasm across the inner membrane. The chain is C4-dicarboxylate transport protein from Pseudomonas chlororaphis (Pseudomonas aureofaciens).